Here is a 252-residue protein sequence, read N- to C-terminus: Geranylgeranylglyceryl phosphate synthase (252 aa).

Mg(2+) is bound by residues aspartate 27 and threonine 57. Sn-glycerol 1-phosphate-binding positions include 175 to 181 (YLEAGSG), 206 to 207 (GG), and 228 to 229 (GN).

This sequence belongs to the GGGP/HepGP synthase family. Group II subfamily. Requires Mg(2+) as cofactor.

It is found in the cytoplasm. The catalysed reaction is sn-glycerol 1-phosphate + (2E,6E,10E)-geranylgeranyl diphosphate = sn-3-O-(geranylgeranyl)glycerol 1-phosphate + diphosphate. It functions in the pathway membrane lipid metabolism; glycerophospholipid metabolism. Functionally, prenyltransferase that catalyzes the transfer of the geranylgeranyl moiety of geranylgeranyl diphosphate (GGPP) to the C3 hydroxyl of sn-glycerol-1-phosphate (G1P). This reaction is the first ether-bond-formation step in the biosynthesis of archaeal membrane lipids. This Metallosphaera sedula (strain ATCC 51363 / DSM 5348 / JCM 9185 / NBRC 15509 / TH2) protein is Geranylgeranylglyceryl phosphate synthase.